The sequence spans 355 residues: Guanine nucleotide-binding protein G(i) subunit alpha-2 (355 aa).

Glycine 2 carries N-myristoyl glycine lipidation. Cysteine 3 carries S-palmitoyl cysteine lipidation. The G-alpha domain occupies 32–355 (REVKLLLLGA…KNNLKDCGLF (324 aa)). Positions 35 to 48 (KLLLLGAGESGKST) are G1 motif. GTP contacts are provided by residues 40–47 (GAGESGKS), 176–182 (LRTRVKT), 201–205 (DVGGQ), 270–273 (NKKD), and alanine 327. Mg(2+) is bound by residues serine 47 and threonine 182. Positions 174–182 (DVLRTRVKT) are G2 motif. A G3 motif region spans residues 197–206 (FKMFDVGGQR). The interval 266 to 273 (ILFLNKKD) is G4 motif. A G5 motif region spans residues 325–330 (TCATDT).

Belongs to the G-alpha family. G(i/o/t/z) subfamily. In terms of assembly, g proteins are composed of 3 units; alpha, beta and gamma. The alpha chain contains the guanine nucleotide binding site.

The protein localises to the cytoplasm. It is found in the cytoskeleton. The protein resides in the microtubule organizing center. It localises to the centrosome. Its subcellular location is the cell membrane. In terms of biological role, guanine nucleotide-binding proteins (G proteins) are involved as modulators or transducers in various transmembrane signaling systems. The G(i) proteins are involved in hormonal regulation of adenylate cyclase: they inhibit the cyclase in response to beta-adrenergic stimuli. May play a role in cell division. This is Guanine nucleotide-binding protein G(i) subunit alpha-2 (gnai2) from Oryzias latipes (Japanese rice fish).